The sequence spans 338 residues: DNA-directed RNA polymerase subunit alpha (338 aa).

Residues 1 to 226 form an alpha N-terminal domain (alpha-NTD) region; sequence MLIAQRPTLS…ELFGLARELN (226 aa). Residues 240 to 338 are alpha C-terminal domain (alpha-CTD); the sequence is DEQLAADLAL…DDAFVEDEQY (99 aa).

This sequence belongs to the RNA polymerase alpha chain family. Homodimer. The RNAP catalytic core consists of 2 alpha, 1 beta, 1 beta' and 1 omega subunit. When a sigma factor is associated with the core the holoenzyme is formed, which can initiate transcription.

The catalysed reaction is RNA(n) + a ribonucleoside 5'-triphosphate = RNA(n+1) + diphosphate. Its function is as follows. DNA-dependent RNA polymerase catalyzes the transcription of DNA into RNA using the four ribonucleoside triphosphates as substrates. The sequence is that of DNA-directed RNA polymerase subunit alpha from Nocardioides sp. (strain ATCC BAA-499 / JS614).